The chain runs to 114 residues: Large ribosomal subunit protein uL22 (114 aa).

This sequence belongs to the universal ribosomal protein uL22 family. As to quaternary structure, part of the 50S ribosomal subunit.

In terms of biological role, this protein binds specifically to 23S rRNA; its binding is stimulated by other ribosomal proteins, e.g. L4, L17, and L20. It is important during the early stages of 50S assembly. It makes multiple contacts with different domains of the 23S rRNA in the assembled 50S subunit and ribosome. The globular domain of the protein is located near the polypeptide exit tunnel on the outside of the subunit, while an extended beta-hairpin is found that lines the wall of the exit tunnel in the center of the 70S ribosome. This Streptococcus gordonii (strain Challis / ATCC 35105 / BCRC 15272 / CH1 / DL1 / V288) protein is Large ribosomal subunit protein uL22.